The sequence spans 287 residues: tRNA pseudouridine synthase B (287 aa).

D38 serves as the catalytic Nucleophile.

Belongs to the pseudouridine synthase TruB family. Type 1 subfamily.

The catalysed reaction is uridine(55) in tRNA = pseudouridine(55) in tRNA. In terms of biological role, responsible for synthesis of pseudouridine from uracil-55 in the psi GC loop of transfer RNAs. This is tRNA pseudouridine synthase B from Mycoplasma mobile (strain ATCC 43663 / 163K / NCTC 11711) (Mesomycoplasma mobile).